The following is a 198-amino-acid chain: Nucleoid occlusion factor SlmA (198 aa).

The HTH tetR-type domain occupies 10-70; sequence NRREEILQSL…SLIEFIEDSL (61 aa). Positions 33 to 52 form a DNA-binding region, H-T-H motif; the sequence is TTAKLAASVGVSEAALYRHF. Residues 119–144 adopt a coiled-coil conformation; the sequence is DRLQGRINQLFERIEVQLRQVMREKK.

This sequence belongs to the nucleoid occlusion factor SlmA family. In terms of assembly, homodimer. Interacts with FtsZ.

It is found in the cytoplasm. It localises to the nucleoid. Its function is as follows. Required for nucleoid occlusion (NO) phenomenon, which prevents Z-ring formation and cell division over the nucleoid. Acts as a DNA-associated cell division inhibitor that binds simultaneously chromosomal DNA and FtsZ, and disrupts the assembly of FtsZ polymers. SlmA-DNA-binding sequences (SBS) are dispersed on non-Ter regions of the chromosome, preventing FtsZ polymerization at these regions. The polypeptide is Nucleoid occlusion factor SlmA (Klebsiella pneumoniae (strain 342)).